The sequence spans 182 residues: Plasmolipin (182 aa).

The interval methionine 1–glycine 20 is disordered. Residues methionine 1–serine 35 are Cytoplasmic-facing. Residues lysine 7–alanine 16 are compositionally biased toward polar residues. Serine 9 is modified (phosphoserine). The 135-residue stretch at phenylalanine 32–arginine 166 folds into the MARVEL domain. The chain crosses the membrane as a helical span at residues alanine 36 to alanine 56. The Extracellular portion of the chain corresponds to aspartate 57–tryptophan 68. A helical transmembrane segment spans residues valine 69–phenylalanine 89. Residues glutamine 90–proline 99 lie on the Cytoplasmic side of the membrane. Residues tryptophan 100–valine 120 form a helical membrane-spanning segment. At alanine 121–serine 141 the chain is on the extracellular side. Residues alanine 142–phenylalanine 162 form a helical membrane-spanning segment. Over glutamine 163 to serine 182 the chain is Cytoplasmic.

This sequence belongs to the MAL family. In terms of assembly, forms oligomers. Phosphorylated. In terms of tissue distribution, detected to the sciatic nerve, brain and kidney. In the sciatic nerve, found in Schwann cells; in the brain, in developing oligodendrocytes, especially of the corpus callosum, of cortical white matter, in the optic nerve and in the stratum radiatum and stratum oriens of the hippocampus. In kidney, segregated to the apical surface of renal tubular epithelia.

Its subcellular location is the cell membrane. The protein resides in the myelin membrane. The protein localises to the apical cell membrane. Functionally, main component of the myelin sheath that plays an important role in myelin membrane biogenesis and myelination. Plays an essential function in apical endocytosis. Regulates epithelial development through the regulation of apical endocytosis. Part of the intracellular machinery that mediates basolateral-to-apical transport of ICAM-1, an essential adhesion receptor in epithelial cells, from the subapical compartment in hepatic epithelial cells. In Rattus norvegicus (Rat), this protein is Plasmolipin (Pllp).